The chain runs to 97 residues: uncharacterized protein (97 aa).

This sequence to M.thermoautotrophicum MTH1236.

This is an uncharacterized protein from Methanocaldococcus jannaschii (strain ATCC 43067 / DSM 2661 / JAL-1 / JCM 10045 / NBRC 100440) (Methanococcus jannaschii).